Here is a 137-residue protein sequence, read N- to C-terminus: Putative pre-16S rRNA nuclease (137 aa).

This sequence belongs to the YqgF nuclease family.

It localises to the cytoplasm. Functionally, could be a nuclease involved in processing of the 5'-end of pre-16S rRNA. This is Putative pre-16S rRNA nuclease from Desulforamulus reducens (strain ATCC BAA-1160 / DSM 100696 / MI-1) (Desulfotomaculum reducens).